Consider the following 429-residue polypeptide: Argininosuccinate lyase (429 aa).

Belongs to the lyase 1 family. Argininosuccinate lyase subfamily.

It localises to the cytoplasm. The catalysed reaction is 2-(N(omega)-L-arginino)succinate = fumarate + L-arginine. Its pathway is amino-acid biosynthesis; L-arginine biosynthesis; L-arginine from L-ornithine and carbamoyl phosphate: step 3/3. The chain is Argininosuccinate lyase from Pyrobaculum aerophilum (strain ATCC 51768 / DSM 7523 / JCM 9630 / CIP 104966 / NBRC 100827 / IM2).